Consider the following 534-residue polypeptide: Prolyl 4-hydroxylase subunit alpha-1 (534 aa).

The first 17 residues, 1-17, serve as a signal peptide directing secretion; the sequence is MIWYILVVGILLPQSLA. N-linked (GlcNAc...) asparagine glycosylation is present at N113. The TPR repeat unit spans residues 205–238; it reads VSVLDYLSYAVYQQGDLDKALLLTKKLLELDPEH. The tract at residues 258–277 is disordered; it reads ANKSSSDDQSDQKTTLKKKG. An N-linked (GlcNAc...) asparagine glycan is attached at N259. The Fe2OG dioxygenase domain maps to 411-519; the sequence is TAEELQVANY…KWVSNKWLHE (109 aa). Fe cation contacts are provided by H429, D431, and H500. K510 is a 2-oxoglutarate binding site.

Belongs to the P4HA family. Heterotetramer of two alpha-1 chains and two beta chains (P4HB)(the beta chain is the multi-functional PDI), where P4HB plays the role of a structural subunit; this tetramer catalyzes the formation of 4-hydroxyproline in collagen. The cofactor is Fe(2+). Requires L-ascorbate as cofactor.

It is found in the endoplasmic reticulum lumen. It catalyses the reaction L-prolyl-[collagen] + 2-oxoglutarate + O2 = trans-4-hydroxy-L-prolyl-[collagen] + succinate + CO2. Its function is as follows. Catalyzes the post-translational formation of 4-hydroxyproline in -Xaa-Pro-Gly- sequences in collagens and other proteins. This chain is Prolyl 4-hydroxylase subunit alpha-1 (P4HA1), found in Bos taurus (Bovine).